A 302-amino-acid polypeptide reads, in one-letter code: NADH-cytochrome b5 reductase 2 (302 aa).

A propeptide spans 1-41 (MFSRLSRSHSKALPIALGTVAIAAATAFYFANRNQHSFVFN) (removed in mature form). The chain crosses the membrane as a helical span at residues 12–32 (ALPIALGTVAIAAATAFYFAN). Positions 51–155 (DKWIDLPISK…KGPIMKWKWQ (105 aa)) constitute an FAD-binding FR-type domain. 158 to 193 (QFKSITLLGAGTGINPLYQLAHHIVENPNDKTKVNL) is a binding site for FAD. Ser-278 is modified (phosphoserine).

The protein belongs to the flavoprotein pyridine nucleotide cytochrome reductase family. FAD serves as cofactor. In terms of processing, there are two isoforms of NADH-cytochrome b5 reductase, a 34 kDa form (p34) and a 32 kDa form (p32). The p34 form becomes firmly anchored to the outer mitochondrial membrane after an incomplete translocation arrest. The p32 form is formed after translocation of the p34 precursor to the inner mitochondrial membrane, where it is processed by mitochondrial inner membrane peptidase (IMP) complex and released to the intermembrane space.

It localises to the mitochondrion intermembrane space. The protein resides in the mitochondrion outer membrane. The enzyme catalyses 2 Fe(III)-[cytochrome b5] + NADH = 2 Fe(II)-[cytochrome b5] + NAD(+) + H(+). In terms of biological role, the outer membrane form may mediate the reduction of outer membrane cytochrome b5, and the soluble inter-membrane space form may transfer electrons from external NADH to cytochrome c, thereby mediating an antimycin-insensitive, energy-coupled oxidation of external NADH by yeast mitochondria. Involved in the reduction of D-erythroascorbyl free radicals. The polypeptide is NADH-cytochrome b5 reductase 2 (MCR1) (Saccharomyces cerevisiae (strain YJM789) (Baker's yeast)).